The chain runs to 198 residues: SCO2-like protein RF_0043 (198 aa).

This sequence belongs to the SCO1/2 family.

The sequence is that of SCO2-like protein RF_0043 from Rickettsia felis (strain ATCC VR-1525 / URRWXCal2) (Rickettsia azadi).